The chain runs to 316 residues: Homoserine O-succinyltransferase (316 aa).

The active-site Acyl-thioester intermediate is the Cys-142. Positions 163 and 192 each coordinate substrate. The Proton acceptor role is filled by His-235. Glu-237 is a catalytic residue. Arg-249 is a binding site for substrate.

The protein belongs to the MetA family.

Its subcellular location is the cytoplasm. It catalyses the reaction L-homoserine + succinyl-CoA = O-succinyl-L-homoserine + CoA. Its pathway is amino-acid biosynthesis; L-methionine biosynthesis via de novo pathway; O-succinyl-L-homoserine from L-homoserine: step 1/1. Functionally, transfers a succinyl group from succinyl-CoA to L-homoserine, forming succinyl-L-homoserine. The protein is Homoserine O-succinyltransferase of Shewanella amazonensis (strain ATCC BAA-1098 / SB2B).